The following is a 277-amino-acid chain: Small ribosomal subunit protein uS2 (277 aa).

A compositionally biased stretch (basic and acidic residues) spans 228–241 (YEERLQAETDKDAE). A disordered region spans residues 228-277 (YEERLQAETDKDAESSTVQQEENPEADIPESIETKESVSAAADSDLDENE).

It belongs to the universal ribosomal protein uS2 family.

This Syntrophus aciditrophicus (strain SB) protein is Small ribosomal subunit protein uS2.